Here is a 597-residue protein sequence, read N- to C-terminus: Translation initiation factor IF-2 (597 aa).

Composition is skewed to low complexity over residues Gly-57–Ala-73 and Thr-81–Asp-95. The tract at residues Gly-57 to Leu-96 is disordered. The tr-type G domain maps to His-98–Lys-271. The G1 stretch occupies residues Gly-107–Thr-114. Gly-107–Thr-114 contacts GTP. The interval Gly-132–His-136 is G2. Positions Asp-153–Gly-156 are G3. Residues Asp-153–His-157 and Asn-207–Asp-210 each bind GTP. Residues Asn-207–Asp-210 are G4. Residues Ser-243–Lys-245 form a G5 region.

It belongs to the TRAFAC class translation factor GTPase superfamily. Classic translation factor GTPase family. IF-2 subfamily.

Its subcellular location is the cytoplasm. Functionally, one of the essential components for the initiation of protein synthesis. Protects formylmethionyl-tRNA from spontaneous hydrolysis and promotes its binding to the 30S ribosomal subunits. Also involved in the hydrolysis of GTP during the formation of the 70S ribosomal complex. This is Translation initiation factor IF-2 from Deinococcus radiodurans (strain ATCC 13939 / DSM 20539 / JCM 16871 / CCUG 27074 / LMG 4051 / NBRC 15346 / NCIMB 9279 / VKM B-1422 / R1).